Consider the following 162-residue polypeptide: Phosphopantetheine adenylyltransferase (162 aa).

S11 contributes to the substrate binding site. ATP contacts are provided by residues 11–12 and H19; that span reads SF. Residues K43, L75, and R89 each coordinate substrate. Residues 90–92, E100, and 125–131 contribute to the ATP site; these read GLR and FSYISSS.

The protein belongs to the bacterial CoaD family. As to quaternary structure, homohexamer. Mg(2+) is required as a cofactor.

Its subcellular location is the cytoplasm. The enzyme catalyses (R)-4'-phosphopantetheine + ATP + H(+) = 3'-dephospho-CoA + diphosphate. It participates in cofactor biosynthesis; coenzyme A biosynthesis; CoA from (R)-pantothenate: step 4/5. Its function is as follows. Reversibly transfers an adenylyl group from ATP to 4'-phosphopantetheine, yielding dephospho-CoA (dPCoA) and pyrophosphate. The protein is Phosphopantetheine adenylyltransferase of Petrotoga mobilis (strain DSM 10674 / SJ95).